Reading from the N-terminus, the 189-residue chain is Potassium-transporting ATPase KdpC subunit (189 aa).

The chain crosses the membrane as a helical span at residues 6-26; it reads PAILFFIVFTILCGGVYPAVV.

This sequence belongs to the KdpC family. In terms of assembly, the system is composed of three essential subunits: KdpA, KdpB and KdpC.

It localises to the cell inner membrane. In terms of biological role, part of the high-affinity ATP-driven potassium transport (or Kdp) system, which catalyzes the hydrolysis of ATP coupled with the electrogenic transport of potassium into the cytoplasm. This subunit acts as a catalytic chaperone that increases the ATP-binding affinity of the ATP-hydrolyzing subunit KdpB by the formation of a transient KdpB/KdpC/ATP ternary complex. This Geotalea uraniireducens (strain Rf4) (Geobacter uraniireducens) protein is Potassium-transporting ATPase KdpC subunit.